We begin with the raw amino-acid sequence, 612 residues long: Dihydroxy-acid dehydratase (612 aa).

Asp-81 provides a ligand contact to Mg(2+). Cys-122 serves as a coordination point for [2Fe-2S] cluster. Positions 123 and 124 each coordinate Mg(2+). At Lys-124 the chain carries N6-carboxylysine. Residue Cys-195 participates in [2Fe-2S] cluster binding. A Mg(2+)-binding site is contributed by Glu-491. Ser-517 (proton acceptor) is an active-site residue.

This sequence belongs to the IlvD/Edd family. As to quaternary structure, homodimer. [2Fe-2S] cluster is required as a cofactor. The cofactor is Mg(2+).

It carries out the reaction (2R)-2,3-dihydroxy-3-methylbutanoate = 3-methyl-2-oxobutanoate + H2O. The enzyme catalyses (2R,3R)-2,3-dihydroxy-3-methylpentanoate = (S)-3-methyl-2-oxopentanoate + H2O. It participates in amino-acid biosynthesis; L-isoleucine biosynthesis; L-isoleucine from 2-oxobutanoate: step 3/4. The protein operates within amino-acid biosynthesis; L-valine biosynthesis; L-valine from pyruvate: step 3/4. In terms of biological role, functions in the biosynthesis of branched-chain amino acids. Catalyzes the dehydration of (2R,3R)-2,3-dihydroxy-3-methylpentanoate (2,3-dihydroxy-3-methylvalerate) into 2-oxo-3-methylpentanoate (2-oxo-3-methylvalerate) and of (2R)-2,3-dihydroxy-3-methylbutanoate (2,3-dihydroxyisovalerate) into 2-oxo-3-methylbutanoate (2-oxoisovalerate), the penultimate precursor to L-isoleucine and L-valine, respectively. This Haemophilus influenzae (strain 86-028NP) protein is Dihydroxy-acid dehydratase.